A 436-amino-acid chain; its full sequence is Probable 4-aminobutyrate aminotransferase (436 aa).

Position 281 is an N6-(pyridoxal phosphate)lysine (K281).

This sequence belongs to the class-III pyridoxal-phosphate-dependent aminotransferase family. Pyridoxal 5'-phosphate is required as a cofactor.

It carries out the reaction 4-aminobutanoate + 2-oxoglutarate = succinate semialdehyde + L-glutamate. The catalysed reaction is (S)-3-amino-2-methylpropanoate + 2-oxoglutarate = 2-methyl-3-oxopropanoate + L-glutamate. The protein operates within amino-acid degradation; 4-aminobutanoate degradation. The sequence is that of Probable 4-aminobutyrate aminotransferase (gabT) from Bacillus subtilis (strain 168).